We begin with the raw amino-acid sequence, 568 residues long: Proline--tRNA ligase (568 aa).

It belongs to the class-II aminoacyl-tRNA synthetase family. ProS type 1 subfamily. As to quaternary structure, homodimer.

The protein localises to the cytoplasm. The enzyme catalyses tRNA(Pro) + L-proline + ATP = L-prolyl-tRNA(Pro) + AMP + diphosphate. Functionally, catalyzes the attachment of proline to tRNA(Pro) in a two-step reaction: proline is first activated by ATP to form Pro-AMP and then transferred to the acceptor end of tRNA(Pro). As ProRS can inadvertently accommodate and process non-cognate amino acids such as alanine and cysteine, to avoid such errors it has two additional distinct editing activities against alanine. One activity is designated as 'pretransfer' editing and involves the tRNA(Pro)-independent hydrolysis of activated Ala-AMP. The other activity is designated 'posttransfer' editing and involves deacylation of mischarged Ala-tRNA(Pro). The misacylated Cys-tRNA(Pro) is not edited by ProRS. The sequence is that of Proline--tRNA ligase from Listeria monocytogenes serotype 4a (strain HCC23).